We begin with the raw amino-acid sequence, 273 residues long: Putative phosphoenolpyruvate synthase regulatory protein (273 aa).

153–160 contacts ADP; sequence GVSRCGKT.

This sequence belongs to the pyruvate, phosphate/water dikinase regulatory protein family. PSRP subfamily.

It carries out the reaction [pyruvate, water dikinase] + ADP = [pyruvate, water dikinase]-phosphate + AMP + H(+). The catalysed reaction is [pyruvate, water dikinase]-phosphate + phosphate + H(+) = [pyruvate, water dikinase] + diphosphate. Its function is as follows. Bifunctional serine/threonine kinase and phosphorylase involved in the regulation of the phosphoenolpyruvate synthase (PEPS) by catalyzing its phosphorylation/dephosphorylation. The polypeptide is Putative phosphoenolpyruvate synthase regulatory protein (Yersinia enterocolitica serotype O:8 / biotype 1B (strain NCTC 13174 / 8081)).